The chain runs to 964 residues: Glycine dehydrogenase (decarboxylating) (964 aa).

At Lys-710 the chain carries N6-(pyridoxal phosphate)lysine.

It belongs to the GcvP family. As to quaternary structure, the glycine cleavage system is composed of four proteins: P, T, L and H. The cofactor is pyridoxal 5'-phosphate.

It carries out the reaction N(6)-[(R)-lipoyl]-L-lysyl-[glycine-cleavage complex H protein] + glycine + H(+) = N(6)-[(R)-S(8)-aminomethyldihydrolipoyl]-L-lysyl-[glycine-cleavage complex H protein] + CO2. Functionally, the glycine cleavage system catalyzes the degradation of glycine. The P protein binds the alpha-amino group of glycine through its pyridoxal phosphate cofactor; CO(2) is released and the remaining methylamine moiety is then transferred to the lipoamide cofactor of the H protein. This chain is Glycine dehydrogenase (decarboxylating), found in Saccharophagus degradans (strain 2-40 / ATCC 43961 / DSM 17024).